The following is a 585-amino-acid chain: MANLNFQQPPRSIANAALAGRTTGGFGGSSLAGHVTPTSGMFQTDFANSYPGTANYGQAPQQQQQQQQQPQLSPNRNAQLSVGGPAISSGNRNANLFGQRQFVERRAMQGLGSGPMSNMGNFMQTGRGGYGTGGGGGGPLNNFHVFGGGGGSDTSTPALLDPTEFPSLTNARGQNDQTLPQSNPLQPPGSKPYGNFFTSFGMVKQPTSEQSEFTMSNEDFPALPGTQNSDGTTNAVGSVAGTGGSGGASTENHLDGTEKPMNSIVVSGSASGSSGSNVGVVGGNGLGAVGSGIGGLAVGGGGGAGSSGGGGVGGNAASGVVGGSHVGLVGSNSGIGGVNSVPNSNAMMGVGGGLGSGSGSSGSGAGGEHLNDNSSNDKLVKSGVQTSPDGKVTNIPATMVNNQFGMVGLLTFIRAAETDPNLVTLSLGTDLTGLGLNLNSQESLHTTFAGPFVAQPCRAQDVEFNVPPEYLINFAIRDKLTAPVLKKLQEDLLFFLFYTNIGDMMQLMAAAELHSREWRYHVEEKIWITRIPGIDQYEKNGTKERGTFYYFDAQSWKRLSKVFQIDPEKLDKCPNISAFMNGQSV.

Positions Phe42 to Tyr56 are enriched in polar residues. 3 disordered regions span residues Phe42–Asn93, Gly148–Lys191, and Gly349–Asn394. The segment covering Gln58–Gln71 has biased composition (low complexity). The segment covering Pro166–Pro184 has biased composition (polar residues). The segment covering Gly349–Gly367 has biased composition (gly residues). Over residues Asp372 to Pro388 the composition is skewed to polar residues.

It belongs to the CNOT2/3/5 family. Component of the CCR4-NOT complex composed of at least Pop2/Caf1-55, Ccr4, Not1, Rga/Not2, and Not3. In terms of tissue distribution, expressed in heterogeneous levels between adjacent germline stem cells (at protein level).

It localises to the cytoplasm. In terms of biological role, component of the CCR4-NOT complex which is one of the major cellular mRNA deadenylases and is linked to various cellular processes including bulk mRNA degradation, miRNA-mediated repression, translational repression during translational initiation and general transcription regulation. Additional complex functions may be a consequence of its influence on mRNA expression. Essential for viability. Acts as a suppressor of position effect variegation (PEV) at the white locus and regulates the expression of several unrelated genes. Plays a role in germline stem cell differentiation in the ovaries. This is Regulator of gene activity from Drosophila melanogaster (Fruit fly).